A 149-amino-acid polypeptide reads, in one-letter code: Calmodulin (149 aa).

EF-hand domains follow at residues Glu8–Asn43, Pro44–Asp79, Asp81–Lys116, and Leu117–Lys149. Residues Asp21, Asp23, Asp25, Thr27, Glu32, Asp57, Asp59, Ser61, Thr63, Glu68, Asp94, Asp96, Asn98, and Glu105 each coordinate Ca(2+). Lys116 is subject to N6,N6,N6-trimethyllysine. The Ca(2+) site is built by Asp130, Asp132, Asp134, Gln136, and Glu141.

This sequence belongs to the calmodulin family.

In terms of biological role, calmodulin mediates the control of a large number of enzymes, ion channels and other proteins by Ca(2+). Among the enzymes to be stimulated by the calmodulin-Ca(2+) complex are a number of protein kinases and phosphatases. The polypeptide is Calmodulin (Trypanosoma brucei brucei).